We begin with the raw amino-acid sequence, 307 residues long: Oxygen-dependent coproporphyrinogen-III oxidase (307 aa).

Ser99 lines the substrate pocket. Residues His103 and His113 each coordinate a divalent metal cation. The Proton donor role is filled by His113. 115–117 contributes to the substrate binding site; that stretch reads NVR. A divalent metal cation contacts are provided by His152 and His182. Residues 247–282 form an important for dimerization region; the sequence is YVEFNLVFDRGTLFGLQSGGRTESILMSMPPVVNWR. 265 to 267 serves as a coordination point for substrate; sequence GGR.

This sequence belongs to the aerobic coproporphyrinogen-III oxidase family. As to quaternary structure, homodimer. Requires a divalent metal cation as cofactor.

It is found in the cytoplasm. The catalysed reaction is coproporphyrinogen III + O2 + 2 H(+) = protoporphyrinogen IX + 2 CO2 + 2 H2O. The protein operates within porphyrin-containing compound metabolism; protoporphyrin-IX biosynthesis; protoporphyrinogen-IX from coproporphyrinogen-III (O2 route): step 1/1. Its function is as follows. Involved in the heme biosynthesis. Catalyzes the aerobic oxidative decarboxylation of propionate groups of rings A and B of coproporphyrinogen-III to yield the vinyl groups in protoporphyrinogen-IX. This is Oxygen-dependent coproporphyrinogen-III oxidase from Paraburkholderia phytofirmans (strain DSM 17436 / LMG 22146 / PsJN) (Burkholderia phytofirmans).